Reading from the N-terminus, the 417-residue chain is Gamma-glutamyl phosphate reductase (417 aa).

The protein belongs to the gamma-glutamyl phosphate reductase family.

It is found in the cytoplasm. The catalysed reaction is L-glutamate 5-semialdehyde + phosphate + NADP(+) = L-glutamyl 5-phosphate + NADPH + H(+). The protein operates within amino-acid biosynthesis; L-proline biosynthesis; L-glutamate 5-semialdehyde from L-glutamate: step 2/2. Catalyzes the NADPH-dependent reduction of L-glutamate 5-phosphate into L-glutamate 5-semialdehyde and phosphate. The product spontaneously undergoes cyclization to form 1-pyrroline-5-carboxylate. In Erwinia tasmaniensis (strain DSM 17950 / CFBP 7177 / CIP 109463 / NCPPB 4357 / Et1/99), this protein is Gamma-glutamyl phosphate reductase.